Consider the following 449-residue polypeptide: Ras-related GTP-binding protein D (449 aa).

Positions methionine 1–tryptophan 55 are disordered. Composition is skewed to acidic residues over residues aspartate 14 to leucine 24 and aspartate 32 to glutamate 47. Residues arginine 120, arginine 121, serine 122, glycine 123, lysine 124, serine 125, serine 126, and threonine 140 each contribute to the GTP site. GDP contacts are provided by arginine 121, serine 122, glycine 123, lysine 124, serine 125, serine 126, threonine 140, glutamate 144, and threonine 146. GTP is bound by residues threonine 146, glycine 169, histidine 228, lysine 229, and aspartate 231. Residues histidine 228, lysine 229, aspartate 231, serine 269, and isoleucine 270 each contribute to the GDP site. Isoleucine 270 is a binding site for GTP. The interval lysine 428–leucine 449 is disordered.

This sequence belongs to the GTR/RAG GTP-binding protein family. In terms of assembly, forms a heterodimer with RRAGA in a sequence-independent manner and RRAGB. Heterodimerization stabilizes RRAG proteins. The GDP-bound form of RRAGD (in complex with the GTP-bound form of RRAGA or RRAGB), interacts with RPTOR, thereby promoting recruitment of mTORC1 to the lysosomes. Component of the lysosomal folliculin complex (LFC), composed of FLCN, FNIP1 (or FNIP2), RagA/RRAGA or RagB/RRAGB GDP-bound, RagC/RRAGC or RagD/RRAGD GTP-bound, and Ragulator. Interacts with NOL8. Interacts with SH3BP4; the interaction with this negative regulator is most probably direct, preferentially occurs with the inactive GDP-bound form of RRAGD and is negatively regulated by amino acids. The Rag heterodimer interacts with SLC38A9; the probable amino acid sensor. Interacts with SESN1, SESN2 and SESN3. The GDP-bound form interacts with TFEB. The GDP-bound form interacts with TFE3. In terms of tissue distribution, expressed in the distal tubule of the kidney.

It is found in the cytoplasm. The protein resides in the nucleus. The protein localises to the lysosome membrane. The enzyme catalyses GTP + H2O = GDP + phosphate + H(+). With respect to regulation, the activation of RagD/RRAGD is mediated by a GTPase activating protein (GAP). In high-amino acid conditions, activated by GTPase activating protein FLCN that stimulates RRAGD GTPase activity to turn it into its active GDP-bound form. In response to amino acid depletion, the GATOR1 complex inactivates RagC/RRAGC by securing the GTP-bound inactive form. Its function is as follows. Guanine nucleotide-binding protein that plays a crucial role in the cellular response to amino acid availability through regulation of the mTORC1 signaling cascade. Forms heterodimeric Rag complexes with RagA/RRAGA or RagB/RRAGB and cycles between an inactive GTP-bound and an active GDP-bound form: RagD/RRAGD is in its active form when GDP-bound RagD/RRAGD forms a complex with GTP-bound RagA/RRAGA (or RagB/RRAGB) and in an inactive form when GTP-bound RagD/RRAGD heterodimerizes with GDP-bound RagA/RRAGA (or RagB/RRAGB). In its active form, promotes the recruitment of mTORC1 to the lysosomes and its subsequent activation by the GTPase RHEB. This is a crucial step in the activation of the MTOR signaling cascade by amino acids. Also plays a central role in the non-canonical mTORC1 complex, which acts independently of RHEB and specifically mediates phosphorylation of MiT/TFE factors TFEB and TFE3: GDP-bound RagD/RRAGD mediates recruitment of MiT/TFE factors TFEB and TFE3. The sequence is that of Ras-related GTP-binding protein D from Mus musculus (Mouse).